A 1213-amino-acid chain; its full sequence is Genetic suppressor element 1 (1213 aa).

Residues Met1–Glu154 form a disordered region. Ser10 is subject to Phosphoserine. The segment covering Met15–Pro33 has biased composition (polar residues). Low complexity-rich tracts occupy residues Ser51–Ala63 and Gly76–Pro89. Residues Ser84 and Ser95 each carry the phosphoserine modification. Residues Val103–Gly114 show a composition bias toward low complexity. The residue at position 305 (Arg305) is an Asymmetric dimethylarginine. The stretch at His319 to Ala402 forms a coiled coil. The disordered stretch occupies residues Leu326 to Leu384. Over residues Leu331–Leu384 the composition is skewed to basic and acidic residues. A Phosphothreonine modification is found at Thr433. Position 496 is an N6-acetyllysine (Lys496). 2 disordered regions span residues Leu527–Val579 and Ser630–Gly719. Basic and acidic residues-rich tracts occupy residues Glu537–Pro560 and Ser630–Pro643. The segment covering Gln648 to Arg657 has biased composition (pro residues). Positions Ser681 to Gly700 are enriched in polar residues. An N6-acetyllysine modification is found at Lys739. 4 positions are modified to phosphoserine: Ser766, Ser826, Ser828, and Ser857. Disordered stretches follow at residues Arg816 to Pro858, Leu898 to Gly979, and Glu1065 to Gln1118. Positions Thr847–Pro858 are enriched in polar residues. Thr905 carries the post-translational modification Phosphothreonine. Ser907 carries the post-translational modification Phosphoserine. The segment covering Glu1065–Gln1081 has biased composition (polar residues). A coiled-coil region spans residues Gln1093–Ala1197. The segment covering Ala1095–Glu1112 has biased composition (acidic residues). The residue at position 1099 (Ser1099) is a Phosphoserine.

In terms of assembly, may be a component of a BHC histone deacetylase complex that contains HDAC1, HDAC2, HMG20B/BRAF35, KDM1A, RCOR1/CoREST, PHF21A/BHC80, ZMYM2, ZNF217, ZMYM3, GSE1 and GTF2I.

The chain is Genetic suppressor element 1 (Gse1) from Mus musculus (Mouse).